A 363-amino-acid chain; its full sequence is Phosphatidylinositol transfer protein sfh-5 (363 aa).

Positions 1–84 (MSTQPSDSAE…SPADIKDSVS (84 aa)) are disordered. Basic and acidic residues predominate over residues 36-46 (DAAKHAEEEPK). Residues 64–76 (KPAAAPAQEADSP) show a composition bias toward low complexity. The region spanning 180–354 (AGDEPAVDEP…EYGGKGADLK (175 aa)) is the CRAL-TRIO domain. Heme-binding residues include tyrosine 200, arginine 220, histidine 253, tyrosine 255, and lysine 289.

The protein belongs to the SFH5 family. The cofactor is heme b.

Its subcellular location is the cytoplasm. It localises to the endoplasmic reticulum membrane. The protein localises to the microsome membrane. It carries out the reaction a 1,2-diacyl-sn-glycero-3-phospho-(1D-myo-inositol)(in) = a 1,2-diacyl-sn-glycero-3-phospho-(1D-myo-inositol)(out). Functionally, non-classical phosphatidylinositol (PtdIns) transfer protein (PITP), which exhibits PtdIns-binding/transfer activity in the absence of detectable PtdCho-binding/transfer activity. Regulates PtdIns(4,5)P2 homeostasis at the plasma membrane. Heme-binding protein that may play a role in organic oxidant-induced stress responses. This chain is Phosphatidylinositol transfer protein sfh-5 (sfh-5), found in Neurospora crassa (strain ATCC 24698 / 74-OR23-1A / CBS 708.71 / DSM 1257 / FGSC 987).